A 192-amino-acid polypeptide reads, in one-letter code: A-type ATP synthase subunit E (192 aa).

Belongs to the V-ATPase E subunit family. Has multiple subunits with at least A(3), B(3), C, D, E, F, H, I and proteolipid K(x).

The protein localises to the cell membrane. Its function is as follows. Component of the A-type ATP synthase that produces ATP from ADP in the presence of a proton gradient across the membrane. The chain is A-type ATP synthase subunit E from Methanocorpusculum labreanum (strain ATCC 43576 / DSM 4855 / Z).